Here is a 250-residue protein sequence, read N- to C-terminus: Histone H1.2 (250 aa).

The span at 1–11 (MSDSAVATSAS) shows a compositional bias: polar residues. Disordered stretches follow at residues 1–53 (MSDS…QMVD) and 101–250 (KLIQ…ATKK). The span at 27 to 42 (KKAAATPKSKKSTAAP) shows a compositional bias: low complexity. In terms of domain architecture, H15 spans 44–118 (SHPPTQQMVD…GASGSFKLSR (75 aa)). Residues 120-133 (AKKDPKPKASAVEK) are compositionally biased toward basic and acidic residues. The span at 151–161 (STSTTKKAAGA) shows a compositional bias: low complexity. Residues 174 to 191 (KSVEKKRADKAKAKDAKK) show a composition bias toward basic and acidic residues. The span at 192–211 (TGTIKAKPTTAKAKSSATKP) shows a compositional bias: low complexity. 2 stretches are compositionally biased toward basic residues: residues 212–225 (KTPK…KPKK) and 235–250 (TAVK…ATKK).

It belongs to the histone H1/H5 family.

It localises to the nucleus. Its subcellular location is the chromosome. Its function is as follows. Histones H1 are necessary for the condensation of nucleosome chains into higher-order structures. The protein is Histone H1.2 (His1.2) of Drosophila virilis (Fruit fly).